The sequence spans 200 residues: Recombination protein RecR (200 aa).

The C4-type zinc-finger motif lies at 60-75 (CVYCQALTEDDVCNIC). Positions 83 to 177 (TKLCIIESML…KISRIGFGVP (95 aa)) constitute a Toprim domain.

It belongs to the RecR family.

May play a role in DNA repair. It seems to be involved in an RecBC-independent recombinational process of DNA repair. It may act with RecF and RecO. The chain is Recombination protein RecR from Francisella tularensis subsp. novicida (strain U112).